The sequence spans 307 residues: Elongation factor Ts (307 aa).

Positions 82-85 (TDFV) are involved in Mg(2+) ion dislocation from EF-Tu.

The protein belongs to the EF-Ts family.

It is found in the cytoplasm. Functionally, associates with the EF-Tu.GDP complex and induces the exchange of GDP to GTP. It remains bound to the aminoacyl-tRNA.EF-Tu.GTP complex up to the GTP hydrolysis stage on the ribosome. The chain is Elongation factor Ts from Nautilia profundicola (strain ATCC BAA-1463 / DSM 18972 / AmH).